Reading from the N-terminus, the 205-residue chain is MIDPDGFRPNVGIVLMRQDGQVFWARRVRRDGWQFPQGGMNTDETPVEAMYRELREETGLLPEHVELLGATPGWLRYRLPSRAVRRNERQVCIGQKQVWFLLQFTGDESHLKLDHTDTPEFDHWRWVDFWYPVEHVVMFKRGVYARALRHLAPLAQSLAGPAAVGAMPERALEAWLPGSSAAGHDSPRKRPRKRNGARAMRINND.

Positions 6-149 (GFRPNVGIVL…KRGVYARALR (144 aa)) constitute a Nudix hydrolase domain. The Nudix box motif lies at 38–59 (GGMNTDETPVEAMYRELREETG). Residues 178–205 (GSSAAGHDSPRKRPRKRNGARAMRINND) are disordered. Over residues 187 to 196 (PRKRPRKRNG) the composition is skewed to basic residues.

Belongs to the Nudix hydrolase family. RppH subfamily. The cofactor is a divalent metal cation.

Accelerates the degradation of transcripts by removing pyrophosphate from the 5'-end of triphosphorylated RNA, leading to a more labile monophosphorylated state that can stimulate subsequent ribonuclease cleavage. The polypeptide is RNA pyrophosphohydrolase (Xanthomonas axonopodis pv. citri (strain 306)).